Consider the following 145-residue polypeptide: Large ribosomal subunit protein uL13 (145 aa).

It belongs to the universal ribosomal protein uL13 family. Part of the 50S ribosomal subunit.

This protein is one of the early assembly proteins of the 50S ribosomal subunit, although it is not seen to bind rRNA by itself. It is important during the early stages of 50S assembly. This Staphylococcus epidermidis (strain ATCC 35984 / DSM 28319 / BCRC 17069 / CCUG 31568 / BM 3577 / RP62A) protein is Large ribosomal subunit protein uL13.